The sequence spans 416 residues: Meiotically up-regulated protein PB1A10.08 (416 aa).

The protein localises to the cytoplasm. Functionally, may have a role in meiosis and sporulation. This chain is Meiotically up-regulated protein PB1A10.08, found in Schizosaccharomyces pombe (strain 972 / ATCC 24843) (Fission yeast).